The following is a 329-amino-acid chain: MPPSAPDDDRDAPAPPHPQIGAYLDALKFERKLSQHTLASYARELAVLQQLGARFAAGIDLMRLQPHHIRRMMAQLHGGGLSGRSIARALSAWRGWYQWLALRDAAVTANPVDGIRAPKSPKRLPKALSVEQAVALMEQLPGDDPEAVRDRAVNELFYSCGLRLSELVGLDLRHAQAGDYASASWLDLEAREVTVLGKGNKRRTVPVGSKAAEALAAWLAVRPQLAQPDAAPEDAHALFLSARGKRLAQRQIQTRMKRNAIAAGVPADVHPHVLRHSFATHMLQSSGDLRAVQELLGHASIASTQVYTSLDFQHLAKIYDQAHPRAKKK.

Residues 14 to 101 enclose the Core-binding (CB) domain; the sequence is APPHPQIGAY…AWRGWYQWLA (88 aa). The 198-residue stretch at 123–320 folds into the Tyr recombinase domain; the sequence is RLPKALSVEQ…DFQHLAKIYD (198 aa). Residues arginine 163, lysine 198, histidine 272, arginine 275, and histidine 298 contribute to the active site. The active-site O-(3'-phospho-DNA)-tyrosine intermediate is tyrosine 307.

This sequence belongs to the 'phage' integrase family. XerC subfamily. In terms of assembly, forms a cyclic heterotetrameric complex composed of two molecules of XerC and two molecules of XerD.

It is found in the cytoplasm. In terms of biological role, site-specific tyrosine recombinase, which acts by catalyzing the cutting and rejoining of the recombining DNA molecules. The XerC-XerD complex is essential to convert dimers of the bacterial chromosome into monomers to permit their segregation at cell division. It also contributes to the segregational stability of plasmids. The polypeptide is Tyrosine recombinase XerC 1 (xerC1) (Ralstonia nicotianae (strain ATCC BAA-1114 / GMI1000) (Ralstonia solanacearum)).